An 82-amino-acid polypeptide reads, in one-letter code: MNPIVAATSVVSAGLAVGLAAIGPGMGQGTAAGYAVEGIARQPEAEGKIRGALLLSFAFMESLTIYGLVVALALLFANPFAG.

M1 bears the N-formylmethionine mark. A run of 2 helical transmembrane segments spans residues 3-23 (PIVA…AAIG) and 57-77 (FAFM…LLFA).

It belongs to the ATPase C chain family. F-type ATPases have 2 components, F(1) - the catalytic core - and F(0) - the membrane proton channel. F(1) has five subunits: alpha(3), beta(3), gamma(1), delta(1), epsilon(1). F(0) has four main subunits: a(1), b(1), b'(1) and c(10-14). The alpha and beta chains form an alternating ring which encloses part of the gamma chain. F(1) is attached to F(0) by a central stalk formed by the gamma and epsilon chains, while a peripheral stalk is formed by the delta, b and b' chains.

It is found in the plastid. The protein localises to the chloroplast thylakoid membrane. Its function is as follows. F(1)F(0) ATP synthase produces ATP from ADP in the presence of a proton or sodium gradient. F-type ATPases consist of two structural domains, F(1) containing the extramembraneous catalytic core and F(0) containing the membrane proton channel, linked together by a central stalk and a peripheral stalk. During catalysis, ATP synthesis in the catalytic domain of F(1) is coupled via a rotary mechanism of the central stalk subunits to proton translocation. Functionally, key component of the F(0) channel; it plays a direct role in translocation across the membrane. A homomeric c-ring of between 10-14 subunits forms the central stalk rotor element with the F(1) delta and epsilon subunits. This is ATP synthase subunit c, chloroplastic from Chlamydomonas reinhardtii (Chlamydomonas smithii).